Here is a 364-residue protein sequence, read N- to C-terminus: Anhydro-N-acetylmuramic acid kinase (364 aa).

Position 11–18 (11–18 (GSSLDGID)) interacts with ATP.

Belongs to the anhydro-N-acetylmuramic acid kinase family.

The catalysed reaction is 1,6-anhydro-N-acetyl-beta-muramate + ATP + H2O = N-acetyl-D-muramate 6-phosphate + ADP + H(+). Its pathway is amino-sugar metabolism; 1,6-anhydro-N-acetylmuramate degradation. It participates in cell wall biogenesis; peptidoglycan recycling. Its function is as follows. Catalyzes the specific phosphorylation of 1,6-anhydro-N-acetylmuramic acid (anhMurNAc) with the simultaneous cleavage of the 1,6-anhydro ring, generating MurNAc-6-P. Is required for the utilization of anhMurNAc either imported from the medium or derived from its own cell wall murein, and thus plays a role in cell wall recycling. The sequence is that of Anhydro-N-acetylmuramic acid kinase from Pseudomonas syringae pv. syringae (strain B728a).